A 304-amino-acid chain; its full sequence is Bifunctional protein FolD (304 aa).

NADP(+) is bound by residues G167–S169, S192, and I233.

This sequence belongs to the tetrahydrofolate dehydrogenase/cyclohydrolase family. Homodimer.

It carries out the reaction (6R)-5,10-methylene-5,6,7,8-tetrahydrofolate + NADP(+) = (6R)-5,10-methenyltetrahydrofolate + NADPH. The catalysed reaction is (6R)-5,10-methenyltetrahydrofolate + H2O = (6R)-10-formyltetrahydrofolate + H(+). It functions in the pathway one-carbon metabolism; tetrahydrofolate interconversion. Catalyzes the oxidation of 5,10-methylenetetrahydrofolate to 5,10-methenyltetrahydrofolate and then the hydrolysis of 5,10-methenyltetrahydrofolate to 10-formyltetrahydrofolate. In Rhodospirillum centenum (strain ATCC 51521 / SW), this protein is Bifunctional protein FolD.